Reading from the N-terminus, the 160-residue chain is Eosinophil cationic protein (160 aa).

An N-terminal signal peptide occupies residues 1–27 (MVPKLFTSQICLLLLLGLMGVEGSLHA). The tract at residues 28 to 72 (RPPQFTRAQWFAIQHISLNPPRCTIAMRAINNYRWRCKNQNTFLR) is required for nearly all of the bactericidal activity; partially involved in LPS-binding and bacterial membrane depolarization. The active-site Proton acceptor is the His-42. 4 disulfides stabilise this stretch: Cys-50-Cys-110, Cys-64-Cys-123, Cys-82-Cys-138, and Cys-89-Cys-98. Tyr-60 is modified (3'-nitrotyrosine). 65 to 69 (KNQNT) provides a ligand contact to substrate. Residues Asn-84, Asn-92, and Asn-119 are each glycosylated (N-linked (GlcNAc...) asparagine). The active-site Proton donor is the His-155.

This sequence belongs to the pancreatic ribonuclease family. In terms of assembly, interacts with bacterial lipopolysaccharide (LPS) and lipoteichoic acid (LTA). In vitro interacts with and insert into lipid bilayers composed of dioleoyl phosphatidylcholine and dioleoyl phosphatidylglycerol. In vitro, tends to form amyloid-like aggregates at pH 3, but not at pH 5, nor 7.

It is found in the secreted. In terms of biological role, cytotoxin and helminthotoxin with low-efficiency ribonuclease activity. Possesses a wide variety of biological activities. Exhibits antibacterial activity, including cytoplasmic membrane depolarization of preferentially Gram-negative, but also Gram-positive strains. Promotes E.coli outer membrane detachment, alteration of the overall cell shape and partial loss of cell content. The sequence is that of Eosinophil cationic protein (RNASE3) from Homo sapiens (Human).